A 382-amino-acid polypeptide reads, in one-letter code: Type 2 DNA topoisomerase 6 subunit A (382 aa).

The region spanning 14–155 (YDPQKVLKKL…MHITADRRGY (142 aa)) is the Topo IIA-type catalytic domain. The active-site O-(5'-phospho-DNA)-tyrosine intermediate is Tyr108. Mg(2+) is bound by residues Glu202 and Asp254.

It belongs to the TOP6A family. Homodimer. Heterotetramer of two Top6A and two Top6B chains. It depends on Mg(2+) as a cofactor.

It carries out the reaction ATP-dependent breakage, passage and rejoining of double-stranded DNA.. Functionally, relaxes both positive and negative superturns and exhibits a strong decatenase activity. In Pyrococcus abyssi (strain GE5 / Orsay), this protein is Type 2 DNA topoisomerase 6 subunit A.